Here is a 322-residue protein sequence, read N- to C-terminus: Putative ankyrin repeat protein L897 (322 aa).

ANK repeat units lie at residues 88-117 (DNEYYTYFALSIGAMDVFKWLISHGFSYDM), 181-210 (NIIDVIEYAVQINNCDIIKILVKKFIFWAN), and 248-277 (NKNEALKYAIMMKNYDMIELLINYNIQTDH).

This Acanthamoeba polyphaga (Amoeba) protein is Putative ankyrin repeat protein L897.